A 189-amino-acid polypeptide reads, in one-letter code: Protein GrpE (189 aa).

The span at 1 to 12 (MDKKKHGSHAGA) shows a compositional bias: basic residues. The interval 1–36 (MDKKKHGSHAGAHHTDEPAAETVAPAAEGAPAAADR) is disordered. Low complexity predominate over residues 20–34 (AETVAPAAEGAPAAA).

It belongs to the GrpE family. As to quaternary structure, homodimer.

The protein localises to the cytoplasm. Participates actively in the response to hyperosmotic and heat shock by preventing the aggregation of stress-denatured proteins, in association with DnaK and GrpE. It is the nucleotide exchange factor for DnaK and may function as a thermosensor. Unfolded proteins bind initially to DnaJ; upon interaction with the DnaJ-bound protein, DnaK hydrolyzes its bound ATP, resulting in the formation of a stable complex. GrpE releases ADP from DnaK; ATP binding to DnaK triggers the release of the substrate protein, thus completing the reaction cycle. Several rounds of ATP-dependent interactions between DnaJ, DnaK and GrpE are required for fully efficient folding. The chain is Protein GrpE from Geobacter metallireducens (strain ATCC 53774 / DSM 7210 / GS-15).